Here is a 31-residue protein sequence, read N- to C-terminus: GSIPACGESCFKGKCYTPGCTCSKYPLCAKN.

Residues 1 to 31 constitute a cross-link (cyclopeptide (Gly-Asn)); that stretch reads GSIPACGESCFKGKCYTPGCTCSKYPLCAKN. 3 cysteine pairs are disulfide-bonded: cysteine 6-cysteine 20, cysteine 10-cysteine 22, and cysteine 15-cysteine 28.

Belongs to the cyclotide family. Post-translationally, this is a cyclic peptide.

Its function is as follows. Probably participates in a plant defense mechanism. The polypeptide is Cyclotide vinc-B (Viola inconspicua).